A 1470-amino-acid chain; its full sequence is Roundabout homolog 2 (1470 aa).

Positions Met-1–Gly-21 are cleaved as a signal peptide. The Extracellular portion of the chain corresponds to Ser-22 to Pro-863. 5 Ig-like C2-type domains span residues Pro-31–Glu-127, Asp-133–Thr-220, Pro-225–Thr-309, Pro-318–Thr-413, and Pro-422–Asp-508. Cys-52 and Cys-110 are oxidised to a cystine. Asn-123 is a glycosylation site (N-linked (GlcNAc...) asparagine). Intrachain disulfides connect Cys-154–Cys-203, Cys-246–Cys-293, and Cys-339–Cys-395. A glycan (N-linked (GlcNAc...) asparagine) is linked at Asn-430. Cys-443 and Cys-492 are disulfide-bonded. 3 Fibronectin type-III domains span residues Pro-528 to Ile-622, Val-641 to Ala-739, and Pro-743 to Arg-840. Residues Asn-756, Asn-786, Asn-793, and Asn-849 are each glycosylated (N-linked (GlcNAc...) asparagine). A helical membrane pass occupies residues Ala-864–Leu-884. At Tyr-885 to Glu-1470 the chain is on the cytoplasmic side. Disordered regions lie at residues Gly-1036–Thr-1089, Glu-1129–Ser-1159, Ile-1190–Ala-1371, and Asp-1383–Glu-1470. Positions Pro-1144 to Pro-1158 are enriched in polar residues. Position 1157 is a phosphothreonine (Thr-1157). The residue at position 1159 (Ser-1159) is a Phosphoserine. Pro residues predominate over residues Thr-1194–Pro-1203. Positions Leu-1215 to Leu-1231 are enriched in acidic residues. Residues Thr-1243 to Pro-1288 show a composition bias toward polar residues. The span at Asp-1315 to Gly-1325 shows a compositional bias: pro residues. Positions Leu-1328–Asn-1343 are enriched in polar residues. Over residues Ser-1413–Pro-1437 the composition is skewed to low complexity. Residues Gly-1461–Glu-1470 are compositionally biased toward polar residues.

This sequence belongs to the immunoglobulin superfamily. ROBO family. Interacts with SLIT2. As to expression, expressed in embryonal spinal cord.

Its subcellular location is the membrane. Receptor for SLIT2, and probably SLIT1, which are thought to act as molecular guidance cue in cellular migration, including axonal navigation at the ventral midline of the neural tube and projection of axons to different regions during neuronal development. The chain is Roundabout homolog 2 (Robo2) from Mus musculus (Mouse).